We begin with the raw amino-acid sequence, 291 residues long: Lys-63-specific deubiquitinase BRCC36 (291 aa).

N-acetylalanine is present on Ala-2. An MPN domain is found at 12–179 (VHLESDAFLV…YTCFQSVQAQ (168 aa)). Zn(2+) contacts are provided by His-122, His-124, and Asp-135. The JAMM motif motif lies at 122–135 (HSHPHITVWPSHVD). At Ser-233 the chain carries Phosphoserine.

This sequence belongs to the peptidase M67A family. BRCC36 subfamily. As to quaternary structure, component of the ARISC complex, at least composed of UIMC1/RAP80, ABRAXAS1, BRCC3/BRCC36, BABAM2 and BABAM1/NBA1. Component of the BRCA1-A complex, at least composed of BRCA1, BARD1, UIMC1/RAP80, ABRAXAS1, BRCC3/BRCC36, BABAM2 and BABAM1/NBA1. In the BRCA1-A complex, interacts directly with ABRAXAS1 and BABAM2. Component of the BRISC complex, at least composed of ABRAXAS2, BRCC3/BRCC36, BABAM2 and BABAM1/NBA1. Identified in a complex with SHMT2 and the other subunits of the BRISC complex. In the BRISC complex, interacts directly with ABRAXAS2. Identified in a complex with ABRAXAS2 and NUMA1. The BRISC complex interacts with the CSN complex. Component of the BRCA1/BRCA2 containing complex (BRCC), which also contains BRCA1, BRCA2, BARD1, BABAM2 and RAD51. BRCC is a ubiquitin E3 ligase complex that enhances cellular survival following DNA damage. Interacts with BRCA1. Binds polyubiquitin. Interacts with PWWP2B. Interacts with HDAC1; this interaction is enhanced in the presence of PWWP2B. Requires Zn(2+) as cofactor.

It localises to the nucleus. The protein localises to the cytoplasm. The protein resides in the cytoskeleton. Its subcellular location is the spindle pole. In terms of biological role, metalloprotease that specifically cleaves 'Lys-63'-linked polyubiquitin chains. Does not have activity toward 'Lys-48'-linked polyubiquitin chains. Component of the BRCA1-A complex, a complex that specifically recognizes 'Lys-63'-linked ubiquitinated histones H2A and H2AX at DNA lesions sites, leading to target the BRCA1-BARD1 heterodimer to sites of DNA damage at double-strand breaks (DSBs). In the BRCA1-A complex, it specifically removes 'Lys-63'-linked ubiquitin on histones H2A and H2AX, antagonizing the RNF8-dependent ubiquitination at double-strand breaks (DSBs). Catalytic subunit of the BRISC complex, a multiprotein complex that specifically cleaves 'Lys-63'-linked ubiquitin in various substrates. Mediates the specific 'Lys-63'-specific deubiquitination associated with the COP9 signalosome complex (CSN), via the interaction of the BRISC complex with the CSN complex. The BRISC complex is required for normal mitotic spindle assembly and microtubule attachment to kinetochores via its role in deubiquitinating NUMA1. Plays a role in interferon signaling via its role in the deubiquitination of the interferon receptor IFNAR1; deubiquitination increases IFNAR1 activity by enhancing its stability and cell surface expression. Acts as a regulator of the NLRP3 inflammasome by mediating deubiquitination of NLRP3, leading to NLRP3 inflammasome assembly. Down-regulates the response to bacterial lipopolysaccharide (LPS) via its role in IFNAR1 deubiquitination. Deubiquitinates HDAC1 and PWWP2B leading to their stabilization. The sequence is that of Lys-63-specific deubiquitinase BRCC36 (Brcc3) from Rattus norvegicus (Rat).